The sequence spans 389 residues: Cellobiose 2-epimerase (389 aa).

It belongs to the cellobiose 2-epimerase family. In terms of assembly, monomer.

It carries out the reaction D-cellobiose = beta-D-glucosyl-(1-&gt;4)-D-mannopyranose. Its function is as follows. Catalyzes the reversible epimerization of cellobiose to 4-O-beta-D-glucopyranosyl-D-mannose (Glc-Man). Catalyzes epimerization but also isomerization for beta-1,4- and alpha-1,4-gluco-oligosaccharides. Can use cellobiose, lactose, cellotriose, maltose and maltotriose. The protein is Cellobiose 2-epimerase of Dictyoglomus turgidum (strain DSM 6724 / Z-1310).